The following is a 588-amino-acid chain: Aspartate--tRNA ligase (588 aa).

E177 serves as a coordination point for L-aspartate. Residues 201–204 (QLFK) form an aspartate region. R223 is a binding site for L-aspartate. ATP is bound by residues 223 to 225 (RDE) and Q232. H451 is a binding site for L-aspartate. An ATP-binding site is contributed by E485. R492 provides a ligand contact to L-aspartate. ATP is bound at residue 537 to 540 (GLDR).

Belongs to the class-II aminoacyl-tRNA synthetase family. Type 1 subfamily. As to quaternary structure, homodimer.

It localises to the cytoplasm. The catalysed reaction is tRNA(Asp) + L-aspartate + ATP = L-aspartyl-tRNA(Asp) + AMP + diphosphate. Functionally, catalyzes the attachment of L-aspartate to tRNA(Asp) in a two-step reaction: L-aspartate is first activated by ATP to form Asp-AMP and then transferred to the acceptor end of tRNA(Asp). The polypeptide is Aspartate--tRNA ligase (Staphylococcus epidermidis (strain ATCC 35984 / DSM 28319 / BCRC 17069 / CCUG 31568 / BM 3577 / RP62A)).